The sequence spans 150 residues: Large ribosomal subunit protein bL9 (150 aa).

Belongs to the bacterial ribosomal protein bL9 family.

Functionally, binds to the 23S rRNA. The chain is Large ribosomal subunit protein bL9 from Ruthia magnifica subsp. Calyptogena magnifica.